A 123-amino-acid polypeptide reads, in one-letter code: uncharacterized protein (123 aa).

Residues 5 to 25 (GTLVIIFAIVLILCIMLLFFY) traverse the membrane as a helical segment. Residues 33-54 (PGVLPPPIPPPTPPPPKKKYDH) are disordered. Residues 35–47 (VLPPPIPPPTPPP) show a composition bias toward pro residues.

This sequence belongs to the asfivirus CP123L family.

The protein resides in the host membrane. The protein localises to the virion. This is an uncharacterized protein from African swine fever virus (isolate Warthog/Namibia/Wart80/1980) (ASFV).